The primary structure comprises 141 residues: NADH dehydrogenase [ubiquinone] 1 alpha subcomplex subunit 11 (141 aa).

Alanine 2 carries the N-acetylalanine modification. Helical transmembrane passes span 21 to 43 (KAYS…RVTL) and 58 to 80 (QYTF…SAHV).

The protein belongs to the complex I NDUFA11 subunit family. Complex I is composed of 45 different subunits.

It is found in the mitochondrion inner membrane. Its function is as follows. Accessory subunit of the mitochondrial membrane respiratory chain NADH dehydrogenase (Complex I), that is believed not to be involved in catalysis. Complex I functions in the transfer of electrons from NADH to the respiratory chain. The immediate electron acceptor for the enzyme is believed to be ubiquinone. This chain is NADH dehydrogenase [ubiquinone] 1 alpha subcomplex subunit 11 (NDUFA11), found in Homo sapiens (Human).